The primary structure comprises 342 residues: Nicotinate-nucleotide--dimethylbenzimidazole phosphoribosyltransferase (342 aa).

The active-site Proton acceptor is the Glu311.

Belongs to the CobT family.

It catalyses the reaction 5,6-dimethylbenzimidazole + nicotinate beta-D-ribonucleotide = alpha-ribazole 5'-phosphate + nicotinate + H(+). It functions in the pathway nucleoside biosynthesis; alpha-ribazole biosynthesis; alpha-ribazole from 5,6-dimethylbenzimidazole: step 1/2. Its function is as follows. Catalyzes the synthesis of alpha-ribazole-5'-phosphate from nicotinate mononucleotide (NAMN) and 5,6-dimethylbenzimidazole (DMB). The sequence is that of Nicotinate-nucleotide--dimethylbenzimidazole phosphoribosyltransferase from Shewanella loihica (strain ATCC BAA-1088 / PV-4).